Consider the following 351-residue polypeptide: Pentatricopeptide repeat-containing protein At2g40240, mitochondrial (351 aa).

The transit peptide at 1–27 directs the protein to the mitochondrion; sequence MSLLRRRFVKQSVNCITFLQILAERSF. PPR repeat units lie at residues 106–140, 141–175, 176–210, 211–245, 246–280, and 281–315; these read RKNA…RLGL, TPST…SVSM, DVTA…GNSP, DSRS…GVTV, LYST…DLRL, and DSES…GLRM.

Belongs to the PPR family. P subfamily.

The protein localises to the mitochondrion. The chain is Pentatricopeptide repeat-containing protein At2g40240, mitochondrial from Arabidopsis thaliana (Mouse-ear cress).